The following is a 147-amino-acid chain: 3-dehydroquinate dehydratase (147 aa).

Y24 serves as the catalytic Proton acceptor. 3 residues coordinate substrate: N75, H81, and D88. H101 serves as the catalytic Proton donor. Residues 102 to 103 and R112 each bind substrate; that span reads IS.

It belongs to the type-II 3-dehydroquinase family. In terms of assembly, homododecamer.

The enzyme catalyses 3-dehydroquinate = 3-dehydroshikimate + H2O. The protein operates within metabolic intermediate biosynthesis; chorismate biosynthesis; chorismate from D-erythrose 4-phosphate and phosphoenolpyruvate: step 3/7. Its function is as follows. Catalyzes a trans-dehydration via an enolate intermediate. This Cereibacter sphaeroides (strain ATCC 17023 / DSM 158 / JCM 6121 / CCUG 31486 / LMG 2827 / NBRC 12203 / NCIMB 8253 / ATH 2.4.1.) (Rhodobacter sphaeroides) protein is 3-dehydroquinate dehydratase.